A 200-amino-acid polypeptide reads, in one-letter code: Pyridoxal 5'-phosphate synthase subunit PdxT (200 aa).

Glycine 46 to serine 48 serves as a coordination point for L-glutamine. The active-site Nucleophile is cysteine 78. Residues arginine 107 and isoleucine 138–arginine 139 each bind L-glutamine. Catalysis depends on charge relay system residues histidine 175 and glutamate 177.

This sequence belongs to the glutaminase PdxT/SNO family. In terms of assembly, in the presence of PdxS, forms a dodecamer of heterodimers. Only shows activity in the heterodimer.

The enzyme catalyses aldehydo-D-ribose 5-phosphate + D-glyceraldehyde 3-phosphate + L-glutamine = pyridoxal 5'-phosphate + L-glutamate + phosphate + 3 H2O + H(+). It carries out the reaction L-glutamine + H2O = L-glutamate + NH4(+). The protein operates within cofactor biosynthesis; pyridoxal 5'-phosphate biosynthesis. Its function is as follows. Catalyzes the hydrolysis of glutamine to glutamate and ammonia as part of the biosynthesis of pyridoxal 5'-phosphate. The resulting ammonia molecule is channeled to the active site of PdxS. The polypeptide is Pyridoxal 5'-phosphate synthase subunit PdxT (Corynebacterium glutamicum (strain ATCC 13032 / DSM 20300 / JCM 1318 / BCRC 11384 / CCUG 27702 / LMG 3730 / NBRC 12168 / NCIMB 10025 / NRRL B-2784 / 534)).